Here is a 49-residue protein sequence, read N- to C-terminus: Small, acid-soluble spore protein O (49 aa).

Residues 1-49 (MGKRKANHTISGMNAASAQGQGAGYNEEFANENLTAAERQNNKKRKKNQ) are disordered. The segment covering 8 to 20 (HTISGMNAASAQG) has biased composition (polar residues).

It belongs to the SspO family.

Its subcellular location is the spore core. The sequence is that of Small, acid-soluble spore protein O from Bacillus cereus (strain AH187).